The sequence spans 602 residues: Potassium-transporting ATPase potassium-binding subunit (602 aa).

The next 4 helical transmembrane spans lie at alanine 5–alanine 25, glycine 65–glutamine 85, glycine 136–isoleucine 156, and leucine 179–isoleucine 199. Positions glutamine 221–proline 248 are disordered. A compositionally biased stretch (basic and acidic residues) spans lysine 231–threonine 241. The next 6 membrane-spanning stretches (helical) occupy residues leucine 283–phenylalanine 303, glutamine 312–threonine 332, glycine 419–glycine 439, alanine 458–leucine 478, isoleucine 523–isoleucine 543, and leucine 566–alanine 586.

It belongs to the KdpA family. As to quaternary structure, the system is composed of three essential subunits: KdpA, KdpB and KdpC.

The protein resides in the cell inner membrane. In terms of biological role, part of the high-affinity ATP-driven potassium transport (or Kdp) system, which catalyzes the hydrolysis of ATP coupled with the electrogenic transport of potassium into the cytoplasm. This subunit binds the periplasmic potassium ions and delivers the ions to the membrane domain of KdpB through an intramembrane tunnel. This Chromobacterium violaceum (strain ATCC 12472 / DSM 30191 / JCM 1249 / CCUG 213 / NBRC 12614 / NCIMB 9131 / NCTC 9757 / MK) protein is Potassium-transporting ATPase potassium-binding subunit.